We begin with the raw amino-acid sequence, 467 residues long: Venom serine carboxypeptidase (467 aa).

An N-terminal signal peptide occupies residues Met-1–Gly-18. N-linked (GlcNAc...) asparagine glycosylation is found at Asn-130 and Asn-169. The active site involves Ser-202. Residues Asn-304, Asn-322, and Asn-344 are each glycosylated (N-linked (GlcNAc...) asparagine). Residues Asp-387 and His-444 contribute to the active site.

The protein belongs to the peptidase S10 family. As to expression, expressed by the venom duct.

It is found in the secreted. It catalyses the reaction Release of a C-terminal amino acid with broad specificity.. In Apis mellifera (Honeybee), this protein is Venom serine carboxypeptidase.